We begin with the raw amino-acid sequence, 633 residues long: Chaperone protein HtpG (633 aa).

The tract at residues 1-341 is a; substrate-binding; it reads MTAPHETMSF…SADLPLNVSR (341 aa). The tract at residues 342–562 is b; sequence ELLQESRDVK…EGDMSGYLQR (221 aa). The segment at 563–633 is c; sequence LLKQAGQKAP…YVQRVNKLLA (71 aa).

This sequence belongs to the heat shock protein 90 family. In terms of assembly, homodimer.

The protein resides in the cytoplasm. Molecular chaperone. Has ATPase activity. The sequence is that of Chaperone protein HtpG from Cupriavidus necator (strain ATCC 17699 / DSM 428 / KCTC 22496 / NCIMB 10442 / H16 / Stanier 337) (Ralstonia eutropha).